We begin with the raw amino-acid sequence, 468 residues long: Ribulose bisphosphate carboxylase large chain (468 aa).

Lys7 bears the N6,N6,N6-trimethyllysine mark. Substrate-binding residues include Asn116 and Thr166. Residue Lys168 is the Proton acceptor of the active site. Position 170 (Lys170) interacts with substrate. 3 residues coordinate Mg(2+): Lys194, Asp196, and Glu197. Lys194 is subject to N6-carboxylysine. The Proton acceptor role is filled by His287. 3 residues coordinate substrate: Arg288, His320, and Ser372.

It belongs to the RuBisCO large chain family. Type I subfamily. Heterohexadecamer of 8 large chains and 8 small chains; disulfide-linked. The disulfide link is formed within the large subunit homodimers. Mg(2+) serves as cofactor. The disulfide bond which can form in the large chain dimeric partners within the hexadecamer appears to be associated with oxidative stress and protein turnover.

The protein resides in the plastid. It is found in the chloroplast. It carries out the reaction 2 (2R)-3-phosphoglycerate + 2 H(+) = D-ribulose 1,5-bisphosphate + CO2 + H2O. The enzyme catalyses D-ribulose 1,5-bisphosphate + O2 = 2-phosphoglycolate + (2R)-3-phosphoglycerate + 2 H(+). Functionally, ruBisCO catalyzes two reactions: the carboxylation of D-ribulose 1,5-bisphosphate, the primary event in carbon dioxide fixation, as well as the oxidative fragmentation of the pentose substrate in the photorespiration process. Both reactions occur simultaneously and in competition at the same active site. The polypeptide is Ribulose bisphosphate carboxylase large chain (Cornus alternifolia (Pagoda dogwood)).